A 130-amino-acid chain; its full sequence is Methylglyoxal synthase (130 aa).

An MGS-like domain is found at 1–130; that stretch reads MSKPRIALIA…DLARNMQDVC (130 aa). Substrate is bound by residues His-11, Lys-15, 37 to 40, and 57 to 58; these read TGTT and SG. The active-site Proton donor/acceptor is Asp-63. His-90 is a binding site for substrate.

Belongs to the methylglyoxal synthase family.

It catalyses the reaction dihydroxyacetone phosphate = methylglyoxal + phosphate. Functionally, catalyzes the formation of methylglyoxal from dihydroxyacetone phosphate. This chain is Methylglyoxal synthase, found in Burkholderia ambifaria (strain MC40-6).